The chain runs to 407 residues: Probable NADPH dehydrogenase (407 aa).

Positions 49 and 124 each coordinate FMN. Catalysis depends on Tyr-206, which acts as the Proton donor. Arg-254 and Arg-357 together coordinate FMN.

This sequence belongs to the NADH:flavin oxidoreductase/NADH oxidase family. FMN is required as a cofactor.

It catalyses the reaction A + NADPH + H(+) = AH2 + NADP(+). Oxidoreductase that binds mammalian estrogens with high affinity. The protein is Probable NADPH dehydrogenase of Candida albicans (strain SC5314 / ATCC MYA-2876) (Yeast).